Here is a 594-residue protein sequence, read N- to C-terminus: Maternal effect protein oskar (594 aa).

Over residues 44 to 62 the composition is skewed to low complexity; sequence QQQPKQQQQQQQHQSQHQH. The tract at residues 44–68 is disordered; sequence QQQPKQQQQQQQHQSQHQHQQQKQK. Residues 174–243 form the HTH OST-type domain; sequence EYPDIDTEIR…SGKRIFNIKP (70 aa).

In terms of assembly, interacts with smaug (smg). In terms of tissue distribution, posterior pole of the oocyte.

In terms of biological role, organizes the germ plasm and directs localization of the posterior determinant nanos. Oskar protein is required to keep oskar RNA and staufen protein at the posterior pole. The chain is Maternal effect protein oskar (osk) from Drosophila virilis (Fruit fly).